Reading from the N-terminus, the 184-residue chain is Adenine phosphoribosyltransferase (184 aa).

This sequence belongs to the purine/pyrimidine phosphoribosyltransferase family. As to quaternary structure, homodimer.

It localises to the cytoplasm. The enzyme catalyses AMP + diphosphate = 5-phospho-alpha-D-ribose 1-diphosphate + adenine. It functions in the pathway purine metabolism; AMP biosynthesis via salvage pathway; AMP from adenine: step 1/1. In terms of biological role, catalyzes a salvage reaction resulting in the formation of AMP, that is energically less costly than de novo synthesis. This chain is Adenine phosphoribosyltransferase, found in Shewanella baltica (strain OS223).